The following is a 528-amino-acid chain: FAD-dependent monooxygenase DEP2 (528 aa).

An N-terminal signal peptide occupies residues 1–23 (MEDGRSTFKVIIIGAGVTGLTLA). 4 residues coordinate FAD: D37, R110, D311, and G324. Residues 479-499 (VFPQILGVLMVMWSSVWLFHL) form a helical membrane-spanning segment. N521 is a glycosylation site (N-linked (GlcNAc...) asparagine).

It belongs to the paxM FAD-dependent monooxygenase family. The cofactor is FAD.

It is found in the membrane. It functions in the pathway polyketide biosynthesis. In terms of biological role, FAD-dependent monooxygenase; part of the gene cluster that mediates the biosynthesis of depudecin, a highly oxidized eleven-carbon linear polyketide that acts as a histone deacetylase (HDAC) inhibitor and makes a small contribution to pathogenesis. The reducing polyketide synthase DEP5 is the central enzyme in depudecin biosynthesis by yielding the backbone polyketide chain. The monooxygenases DEP2 and DEP4, as well as the uncharacterized protein DEP1, then act as tailoring enzymes to modify the intermediate polyketide chain into depudecin. This Alternaria brassicicola (Dark leaf spot agent) protein is FAD-dependent monooxygenase DEP2.